Consider the following 131-residue polypeptide: Small ribosomal subunit protein uS8 (131 aa).

The protein belongs to the universal ribosomal protein uS8 family. Part of the 30S ribosomal subunit. Contacts proteins S5 and S12.

One of the primary rRNA binding proteins, it binds directly to 16S rRNA central domain where it helps coordinate assembly of the platform of the 30S subunit. The chain is Small ribosomal subunit protein uS8 from Ruminiclostridium cellulolyticum (strain ATCC 35319 / DSM 5812 / JCM 6584 / H10) (Clostridium cellulolyticum).